A 772-amino-acid chain; its full sequence is Semaphorin-3A (772 aa).

The first 20 residues, 1 to 20 (MGWFTGIACLFWGVLLTARA), serve as a signal peptide directing secretion. One can recognise a Sema domain in the interval 31-514 (RLKLSYKEML…STAGVAQLPL (484 aa)). An N-linked (GlcNAc...) asparagine glycan is attached at Asn53. Cys103 and Cys114 are disulfide-bonded. Asn125 carries N-linked (GlcNAc...) asparagine glycosylation. 4 disulfide bridges follow: Cys132–Cys141, Cys269–Cys381, Cys293–Cys341, and Cys517–Cys535. In terms of domain architecture, Ig-like C2-type spans 579–665 (PSLEERIIYG…GFMQTLLKVT (87 aa)). N-linked (GlcNAc...) asparagine glycosylation occurs at Asn591. A disulfide bridge connects residues Cys650 and Cys723. Basic residues predominate over residues 729–738 (RDRKQRRQRP). A disordered region spans residues 729–772 (RDRKQRRQRPGHSQGSSNKWKHMQESKKGRNRRTHEFERAPRSV). Residues 750–772 (HMQESKKGRNRRTHEFERAPRSV) are compositionally biased toward basic and acidic residues.

It belongs to the semaphorin family. Interacts with PXND1.

The protein localises to the secreted. In terms of biological role, plays a role in growth cones guidance. May function to pattern sensory projections by selectively repelling axons that normally terminate dorsally. Involved in the development of the olfactory system and in neuronal control of puberty. The protein is Semaphorin-3A (Sema3a) of Mus musculus (Mouse).